The sequence spans 610 residues: MSDQFDAKAFLKTVTSQPGVYRMYDAGGTVIYVGKAKDLKKRLSSYFRSNLASRKTEALVAQIQQIDVTVTHTETEALLLEHNYIKLYQPRYNVLLRDDKSYPFIFLSGDTHPRLAMHRGAKHAKGEYFGPFPNGYAVRETLALLQKIFPIRQCENSVYRNRSRPCLQYQIGRCLGPCVEGLVSEEEYAQQVEYVRLFLSGKDDQVLTQLISRMETASQNLEFEEAARIRDQIQAVRRVTEKQFVSNTGDDLDVIGVAFDAGMACVHVLFIRQGKVLGSRSYFPKVPGGTELSEVVETFVGQFYLQGSQMRTLPGEILLDFNLSDKTLLADSLSELAGRKINVQTKPRGDRARYLKLARTNAATALTSKLSQQSTVHQRLTALASVLKLPEVKRMECFDISHTMGEQTVASCVVFDANGPLRAEYRRYNITGITPGDDYAAMNQVLRRRYGKAIDDSKIPDVILIDGGKGQLAQAKNVFAELDVSWDKNHPLLLGVAKGADRKAGLETLFFEPEGEGFSLPPDSPALHVIQHIRDESHDHAIGGHRKKRAKVKNTSSLETIEGIGPKRRQMLLKYMGGLQGLRNASVEEIAKVPGISQGLAEKIFWSLKH.

Residues 16–94 form the GIY-YIG domain; that stretch reads SQPGVYRMYD…IKLYQPRYNV (79 aa). The UVR domain maps to 204 to 239; the sequence is DQVLTQLISRMETASQNLEFEEAARIRDQIQAVRRV.

It belongs to the UvrC family. As to quaternary structure, interacts with UvrB in an incision complex.

The protein resides in the cytoplasm. Functionally, the UvrABC repair system catalyzes the recognition and processing of DNA lesions. UvrC both incises the 5' and 3' sides of the lesion. The N-terminal half is responsible for the 3' incision and the C-terminal half is responsible for the 5' incision. The chain is UvrABC system protein C from Escherichia coli (strain UTI89 / UPEC).